Consider the following 75-residue polypeptide: Defensin J1-1 (75 aa).

An N-terminal signal peptide occupies residues 1–27; that stretch reads MAGFSKVVATIFLMMLLVFATDMMAEA. 4 disulfide bridges follow: Cys-30–Cys-74, Cys-41–Cys-61, Cys-47–Cys-68, and Cys-51–Cys-70.

It belongs to the DEFL family. In terms of assembly, monomer. Expressed in orange and red ripe fruit and to a lesser extent in mature, green fruit. Present in trace in young, green fruit.

It localises to the secreted. In terms of biological role, plant defense peptide with antifungal activity against F.oxysporum and B.cinerea. In Capsicum annuum (Capsicum pepper), this protein is Defensin J1-1.